A 294-amino-acid polypeptide reads, in one-letter code: tRNA dimethylallyltransferase (294 aa).

Glycine 10–threonine 17 serves as a coordination point for ATP. Threonine 12–threonine 17 lines the substrate pocket. Residues aspartate 35–glutamine 38 form an interaction with substrate tRNA region.

Belongs to the IPP transferase family. As to quaternary structure, monomer. It depends on Mg(2+) as a cofactor.

It catalyses the reaction adenosine(37) in tRNA + dimethylallyl diphosphate = N(6)-dimethylallyladenosine(37) in tRNA + diphosphate. Catalyzes the transfer of a dimethylallyl group onto the adenine at position 37 in tRNAs that read codons beginning with uridine, leading to the formation of N6-(dimethylallyl)adenosine (i(6)A). The sequence is that of tRNA dimethylallyltransferase from Streptococcus mutans serotype c (strain ATCC 700610 / UA159).